We begin with the raw amino-acid sequence, 31 residues long: Jingzhaotoxin F7-15.33 (31 aa).

Intrachain disulfides connect Cys2–Cys16, Cys9–Cys21, and Cys15–Cys28.

The protein belongs to the neurotoxin 10 (Hwtx-1) family. Expressed by the venom gland.

It localises to the secreted. Probable ion channel inhibitor. This chain is Jingzhaotoxin F7-15.33, found in Chilobrachys guangxiensis (Chinese earth tiger tarantula).